The following is a 324-amino-acid chain: MKTAKIYQYQLPMDSGVILREQRLQQRDGLVIELSDGIHTARGEVAPLPEFSQETLEQAREDLISLTQSWLNNEELDLDSNCPSVAFGFSMALLELEKQLPQEGNYQAAPLCSGDPDDLVVKLNEMSGKKIAKIKVGLYEPIRDGMVVNMFLELISDLSLRLDANRGWTTKKAEQFANYIHPQFRSRIEFLEEPCTTPEESLAFSKATNIAIAWDETVRDDGFTVETQEGVAAIVIKPTLVGSVEKCISLIEQAHQLGMQAVISSSIESSLALTQLARLAAWKTPETIPGLDTIDLFKMQLDTSWPNCDLPVAQLADLEVIWEN.

Residue Lys-135 is the Proton donor of the active site. Mg(2+) contacts are provided by Asp-163, Glu-192, and Asp-215. The active-site Proton acceptor is the Lys-237.

The protein belongs to the mandelate racemase/muconate lactonizing enzyme family. MenC type 1 subfamily. Requires a divalent metal cation as cofactor.

It catalyses the reaction (1R,6R)-6-hydroxy-2-succinyl-cyclohexa-2,4-diene-1-carboxylate = 2-succinylbenzoate + H2O. The protein operates within quinol/quinone metabolism; 1,4-dihydroxy-2-naphthoate biosynthesis; 1,4-dihydroxy-2-naphthoate from chorismate: step 4/7. It functions in the pathway quinol/quinone metabolism; menaquinone biosynthesis. In terms of biological role, converts 2-succinyl-6-hydroxy-2,4-cyclohexadiene-1-carboxylate (SHCHC) to 2-succinylbenzoate (OSB). The sequence is that of o-succinylbenzoate synthase from Aliivibrio fischeri (strain MJ11) (Vibrio fischeri).